The primary structure comprises 421 residues: Mannose-1-phosphate guanyltransferase alpha-A (421 aa).

This sequence belongs to the transferase hexapeptide repeat family.

It carries out the reaction alpha-D-mannose 1-phosphate + GTP + H(+) = GDP-alpha-D-mannose + diphosphate. It functions in the pathway nucleotide-sugar biosynthesis; GDP-alpha-D-mannose biosynthesis; GDP-alpha-D-mannose from alpha-D-mannose 1-phosphate (GTP route): step 1/1. The polypeptide is Mannose-1-phosphate guanyltransferase alpha-A (gmppa-a) (Xenopus laevis (African clawed frog)).